We begin with the raw amino-acid sequence, 244 residues long: Glutathione S-transferase theta-2 (244 aa).

In terms of domain architecture, GST N-terminal spans 2 to 82 (GLELYLDLLS…YLSSKYQVAD (81 aa)). Glutathione contacts are provided by residues 40–41 (HL), 53–54 (KV), 66–67 (ES), and 104–107 (DNIR). A GST C-terminal domain is found at 88–230 (DLQARAQVHE…AKKTLPVPPP (143 aa)).

Belongs to the GST superfamily. Theta family. Homodimer. In terms of tissue distribution, highest values found in liver followed by testis, adrenal gland, kidney, lung, brain and skeletal muscle. In liver, highest expression found in central vein limiting plate hepatocytes. In lung, expressed mainly in club cells of the bronchiolar epithelium and, at low levels, in type II alveolar cells.

The protein resides in the cytoplasm. It is found in the cytosol. It localises to the nucleus. The enzyme catalyses RX + glutathione = an S-substituted glutathione + a halide anion + H(+). Functionally, catalyzes the inactivation of reactive sulfate esters in carcinogenic arylmethanols. Highest activity towards ethacrynic acid and cumene hydroperoxide. This chain is Glutathione S-transferase theta-2 (Gstt2), found in Rattus norvegicus (Rat).